We begin with the raw amino-acid sequence, 325 residues long: Probable tRNA-dihydrouridine synthase 2 (325 aa).

18-20 is an FMN binding site; it reads PME. The Proton donor role is filled by cysteine 105. FMN contacts are provided by residues lysine 143, 208 to 210, and 232 to 233; these read NGD and GR.

Belongs to the Dus family. FMN is required as a cofactor.

It catalyses the reaction a 5,6-dihydrouridine in tRNA + NAD(+) = a uridine in tRNA + NADH + H(+). The enzyme catalyses a 5,6-dihydrouridine in tRNA + NADP(+) = a uridine in tRNA + NADPH + H(+). Functionally, catalyzes the synthesis of 5,6-dihydrouridine (D), a modified base found in the D-loop of most tRNAs, via the reduction of the C5-C6 double bond in target uridines. This chain is Probable tRNA-dihydrouridine synthase 2 (dus2), found in Bacillus subtilis (strain 168).